The sequence spans 162 residues: uncharacterized protein (162 aa).

5 consecutive transmembrane segments (helical) span residues Thr-15 to Leu-40, Ile-47 to Leu-66, Tyr-76 to Tyr-98, Lys-105 to Leu-124, and Gly-128 to Ile-150.

The protein resides in the cell membrane. This is an uncharacterized protein from Archaeoglobus fulgidus (strain ATCC 49558 / DSM 4304 / JCM 9628 / NBRC 100126 / VC-16).